A 50-amino-acid polypeptide reads, in one-letter code: Large ribosomal subunit protein eL39 (50 aa).

The protein belongs to the eukaryotic ribosomal protein eL39 family.

The polypeptide is Large ribosomal subunit protein eL39 (Methanosphaerula palustris (strain ATCC BAA-1556 / DSM 19958 / E1-9c)).